The following is a 335-amino-acid chain: Aspartate carbamoyltransferase catalytic subunit (335 aa).

Carbamoyl phosphate is bound by residues R54 and T55. Residue K82 coordinates L-aspartate. Residues R104, H134, and Q137 each contribute to the carbamoyl phosphate site. Positions 177 and 232 each coordinate L-aspartate. G277 and P278 together coordinate carbamoyl phosphate.

The protein belongs to the aspartate/ornithine carbamoyltransferase superfamily. ATCase family. As to quaternary structure, heterododecamer (2C3:3R2) of six catalytic PyrB chains organized as two trimers (C3), and six regulatory PyrI chains organized as three dimers (R2).

It catalyses the reaction carbamoyl phosphate + L-aspartate = N-carbamoyl-L-aspartate + phosphate + H(+). It participates in pyrimidine metabolism; UMP biosynthesis via de novo pathway; (S)-dihydroorotate from bicarbonate: step 2/3. Catalyzes the condensation of carbamoyl phosphate and aspartate to form carbamoyl aspartate and inorganic phosphate, the committed step in the de novo pyrimidine nucleotide biosynthesis pathway. This is Aspartate carbamoyltransferase catalytic subunit from Paenarthrobacter aurescens (strain TC1).